Consider the following 328-residue polypeptide: Aryl-hydrocarbon-interacting protein-like 1 (328 aa).

Residues 53 to 145 (KQVGHPMHII…DLDELQKEPQ (93 aa)) form the PPIase FKBP-type domain. TPR repeat units lie at residues 178–211 (VPILHGEGNRLFKLGRYEEASNKYQEAIVCLRNL), 230–263 (NTLILNYCQCLLKKEEYYEVLEHTSDILRHHPGI), and 264–297 (VKAYYVRARAHAEVWNEAEAKADLEKVLELEPSM).

As to quaternary structure, directly interacts with NUB1.

It localises to the cytoplasm. Its subcellular location is the nucleus. In terms of biological role, may be important in protein trafficking and/or protein folding and stabilization. The polypeptide is Aryl-hydrocarbon-interacting protein-like 1 (AIPL1) (Bos taurus (Bovine)).